The primary structure comprises 716 residues: MTSPSPSGNVVVVGTDGTSSVSDRWPPQKTWISPPRVPIDRHFVTAAVPHVLMFLLVCIVFTAQQTRISTLEKRIDQLVVQIDQLPSSDSNTDDDDVAKSRRVRNSCMCPAGPPGERGPVGPPGLRGSPGWPGLPGLPAPYYRRPRVPLSNNLDESISRKMRAFGMLYSPDGQAIQLRGMPGPPGPAGPKGLRGYPGFPGPIGLDGPRGLPGTPGSKGDRGERGPLGPPGFPGPKGDRGVMTGPYVGPHAGPGPMSHHTNMGNVLPGPPGPPGPPGPAGRDGRHGLKGDRGLPGFDGESKIGPKGETGSPGRDGIPGARGPPGERGEKGDTAFLSTYPRVASSSTASSPGPPGPPGPPGVCHASQCTGIQGPPGEPGRTIIGPQGPPGEKGERGERGEPGDRGLPGAAGAANLLNGGKALVGPPGPPGRDGRPGDKGEKGEQGLRGDMGLPGPEGTPGKRGRRGRHGISLVAPNGTINEDLKKLLKTELMPLLIEDISELRGKNVIPGPPGPPGPRGHHGPVGPSGERGPQGLPGHSGERGDRGDIGPPGLPGQPGAGEISGSQSGPRGPPGLPGPPGEKGDLGPPGLPGQPGSLGLPGPPGPMGLRGPHGTEGETGKQGPEGSKGYPGPMGPQGPPGNDGEPGIDGRPGPAGEKGDQGIPGLDAPCPTGPDGLPLPYCSWKPMDGKNDVWERRKRASLPGAQPGKGAETRPPVTD.

Disordered stretches follow at residues 85–122 and 183–472; these read LPSS…PVGP and PPGP…SLVA. 3 triple-helical region regions span residues 179–238, 265–298, and 302–330; these read GMPG…KGDR, LPGP…FDGE, and GPKG…EKGD. Over residues 266 to 277 the composition is skewed to pro residues; sequence PGPPGPPGPPGP. Over residues 280 to 290 the composition is skewed to basic and acidic residues; that stretch reads RDGRHGLKGDR. The span at 349-358 shows a compositional bias: pro residues; that stretch reads PGPPGPPGPP. Triple-helical region stretches follow at residues 385 to 411 and 422 to 467; these read GPPG…AGAA and GPPG…GRHG. Basic and acidic residues predominate over residues 389–401; sequence EKGERGERGEPGD. The span at 402 to 422 shows a compositional bias: low complexity; sequence RGLPGAAGAANLLNGGKALVG. Residues 429–444 show a composition bias toward basic and acidic residues; the sequence is RDGRPGDKGEKGEQGL. A glycan (N-linked (GlcNAc...) asparagine) is linked at Asn474. The disordered stretch occupies residues 503-716; it reads KNVIPGPPGP…GAETRPPVTD (214 aa). Triple-helical region regions lie at residues 507–557, 566–603, and 605–664; these read PGPP…QPGA, GPRG…PPGP, and GLRG…PGLD. The span at 568-577 shows a compositional bias: pro residues; it reads RGPPGLPGPP.

This sequence belongs to the cuticular collagen family. Collagen polypeptide chains are complexed within the cuticle by disulfide bonds and other types of covalent cross-links.

Functionally, nematode cuticles are composed largely of collagen-like proteins. The cuticle functions both as an exoskeleton and as a barrier to protect the worm from its environment. This chain is Putative cuticle collagen 99 (col-99), found in Caenorhabditis elegans.